Consider the following 854-residue polypeptide: MIDTKNLDSHTPMMQQYLKLKAQHPDILLFYRMGDFYELFYDDAKRASQLMDISLTKRGASAGQPIPMAGVPYHAVENYLAKLVALGESVAICEQIGDPATTKGPVERRVVRIVTPGTLSDEALLNERQDNLLAALWQAPQGFGYATLDITSGRFLVSEPADREAMAAELQRTNPAELLYPETLQDMKLIEHRRGQRRRPLWEFELDTARQQLTLQFGTRDLNGFGIERAQLALRAAGCLLQYAKDTQRTSLPHIRAVTLELQQDGIVMDAATRRNLELTQNLSGGGENTLADVLDRTVTPMGSRMLKRWLHMPTRDITTLTYRQQSIRALQDHVAELQPLLRQVGDLERVLARLALRSARPRDLARMRYAFTQLPAIQALLCGQSEPYLPQLLDRVGEFETLRDLLARAIIEAPPVLVRDGGVIAPGYHAELDEWRGLAAGATDYLDRLELREREKTGLETLKVGFNAVHGYFIQLSRGQSHLVPIHYVRRQTLKNAERYIIPELKEYEDKVLTSKSKALALEKALYDELFDLLLPHLAALQQSATALAELDVLSNLAERAETLRYVCPTIDARQGIHISGGRHPVVEHVLSEPFIANPLTLSDARRMLIITGPNMGGKSTYMRQTALIVLLAYIGSFVPADEATIGPIDRIFTRVGAADDLASGRSTFMVEMTETANILHNATHQSLVLMDEIGRGTSTYDGLSLAWASAESLAGRIKAMTLFATHYFELTTLPEKMEGVVNVHLDAVEHGDTIAFMHSVQEGAASKSYGLSVAALAGVPREVIKRARQKLRELETLSTGAAAGSVDGSQLSLLQPEEQPVAPAVEALENLDPDSLSPRQALEWLYRLKKML.

614–621 (GPNMGGKS) contacts ATP.

It belongs to the DNA mismatch repair MutS family.

This protein is involved in the repair of mismatches in DNA. It is possible that it carries out the mismatch recognition step. This protein has a weak ATPase activity. The sequence is that of DNA mismatch repair protein MutS from Sodalis glossinidius (strain morsitans).